The sequence spans 54 residues: uncharacterized protein (54 aa).

This is an uncharacterized protein from Saccharolobus solfataricus (Sulfolobus solfataricus).